The chain runs to 317 residues: D-alanine--D-alanine ligase (317 aa).

The 198-residue stretch at 111-308 folds into the ATP-grasp domain; it reads KRFWNGIGIP…YASLVEKIAQ (198 aa). 137–192 contributes to the ATP binding site; sequence EEQMSYPVIVKPSREGSTIGINKAMNRAELDDALIKALEYDSDILVEEFIDGPEFT. Residues Asp262, Glu275, and Asn277 each contribute to the Mg(2+) site.

It belongs to the D-alanine--D-alanine ligase family. Requires Mg(2+) as cofactor. Mn(2+) is required as a cofactor.

It localises to the cytoplasm. The catalysed reaction is 2 D-alanine + ATP = D-alanyl-D-alanine + ADP + phosphate + H(+). It participates in cell wall biogenesis; peptidoglycan biosynthesis. Functionally, cell wall formation. This is D-alanine--D-alanine ligase from Marinomonas sp. (strain MWYL1).